We begin with the raw amino-acid sequence, 182 residues long: Large ribosomal subunit protein uL6 (182 aa).

The protein belongs to the universal ribosomal protein uL6 family. In terms of assembly, part of the 50S ribosomal subunit.

Functionally, this protein binds to the 23S rRNA, and is important in its secondary structure. It is located near the subunit interface in the base of the L7/L12 stalk, and near the tRNA binding site of the peptidyltransferase center. This chain is Large ribosomal subunit protein uL6, found in Trichormus variabilis (strain ATCC 29413 / PCC 7937) (Anabaena variabilis).